The following is a 263-amino-acid chain: tRNA (guanine-N(1)-)-methyltransferase (263 aa).

S-adenosyl-L-methionine contacts are provided by residues Gly-113 and 137–142 (LGDYVL).

It belongs to the RNA methyltransferase TrmD family. As to quaternary structure, homodimer.

The protein resides in the cytoplasm. The enzyme catalyses guanosine(37) in tRNA + S-adenosyl-L-methionine = N(1)-methylguanosine(37) in tRNA + S-adenosyl-L-homocysteine + H(+). Its function is as follows. Specifically methylates guanosine-37 in various tRNAs. The polypeptide is tRNA (guanine-N(1)-)-methyltransferase (Renibacterium salmoninarum (strain ATCC 33209 / DSM 20767 / JCM 11484 / NBRC 15589 / NCIMB 2235)).